The following is a 201-amino-acid chain: uncharacterized protein (201 aa).

A helical transmembrane segment spans residues 11 to 31 (IWKSLYLLIIVGMLYIGYILI).

It localises to the membrane. This is an uncharacterized protein from Rickettsia prowazekii (strain Madrid E).